The primary structure comprises 576 residues: Apolipoprotein N-acyltransferase 1 (576 aa).

The next 7 helical transmembrane spans lie at 15–35 (LILC…FSFF), 38–58 (GVFA…TSIW), 60–80 (AFLW…YWIP), 92–112 (FVSI…FFLF), 128–148 (YILL…FQIF), 168–188 (ICGV…FLIL), and 204–224 (IASL…IGYI). In terms of domain architecture, CN hydrolase spans 236–538 (LSVLMIQPDT…TGTRAFSIRL (303 aa)). The active-site Proton acceptor is glutamate 285. Residue lysine 355 is part of the active site. The active-site Nucleophile is the cysteine 446. The helical transmembrane segment at 549-569 (FGNSFLWIFCILILISRLIFV) threads the bilayer.

It belongs to the CN hydrolase family. Apolipoprotein N-acyltransferase subfamily.

The protein localises to the cell inner membrane. The catalysed reaction is N-terminal S-1,2-diacyl-sn-glyceryl-L-cysteinyl-[lipoprotein] + a glycerophospholipid = N-acyl-S-1,2-diacyl-sn-glyceryl-L-cysteinyl-[lipoprotein] + a 2-acyl-sn-glycero-3-phospholipid + H(+). It functions in the pathway protein modification; lipoprotein biosynthesis (N-acyl transfer). In terms of biological role, catalyzes the phospholipid dependent N-acylation of the N-terminal cysteine of apolipoprotein, the last step in lipoprotein maturation. In Leptospira interrogans serogroup Icterohaemorrhagiae serovar copenhageni (strain Fiocruz L1-130), this protein is Apolipoprotein N-acyltransferase 1.